The following is a 431-amino-acid chain: UDP-N-acetylmuramate--L-alanine ligase (431 aa).

ATP is bound at residue 108 to 114 (GAHGKST).

It belongs to the MurCDEF family.

The protein localises to the cytoplasm. It catalyses the reaction UDP-N-acetyl-alpha-D-muramate + L-alanine + ATP = UDP-N-acetyl-alpha-D-muramoyl-L-alanine + ADP + phosphate + H(+). It participates in cell wall biogenesis; peptidoglycan biosynthesis. In terms of biological role, cell wall formation. This chain is UDP-N-acetylmuramate--L-alanine ligase, found in Campylobacter jejuni subsp. jejuni serotype O:23/36 (strain 81-176).